The following is a 98-amino-acid chain: NADH-ubiquinone oxidoreductase chain 4L (98 aa).

Helical transmembrane passes span 1 to 21 (MTPT…GLTF), 26 to 46 (LLSA…SMAL), and 59 to 79 (APML…ALLV).

The protein belongs to the complex I subunit 4L family. As to quaternary structure, core subunit of respiratory chain NADH dehydrogenase (Complex I) which is composed of 45 different subunits.

It is found in the mitochondrion inner membrane. The enzyme catalyses a ubiquinone + NADH + 5 H(+)(in) = a ubiquinol + NAD(+) + 4 H(+)(out). Functionally, core subunit of the mitochondrial membrane respiratory chain NADH dehydrogenase (Complex I) which catalyzes electron transfer from NADH through the respiratory chain, using ubiquinone as an electron acceptor. Part of the enzyme membrane arm which is embedded in the lipid bilayer and involved in proton translocation. The sequence is that of NADH-ubiquinone oxidoreductase chain 4L (mt-nd4l) from Danio rerio (Zebrafish).